The following is a 296-amino-acid chain: NADPH-dependent 1-acyldihydroxyacetone phosphate reductase (296 aa).

Isoleucine 9 is an NADP(+) binding site. Residues 11–15 (GCSEG) carry the GXSXG motif. Positions 35, 41, 56, 84, 117, 148, 152, 181, and 183 each coordinate NADP(+). Catalysis depends on tyrosine 148, which acts as the Proton donor. Residue lysine 152 is the Lowers pKa of active site Tyr of the active site.

The protein belongs to the short-chain dehydrogenases/reductases (SDR) family.

The protein resides in the lipid droplet. The protein localises to the cytoplasm. Its subcellular location is the vacuole. It localises to the endoplasmic reticulum. It is found in the golgi apparatus. The protein resides in the mitochondrion outer membrane. The catalysed reaction is 1-hexadecanoyl-sn-glycero-3-phosphate + NADP(+) = 1-hexadecanoylglycerone 3-phosphate + NADPH + H(+). It carries out the reaction a 1-acylglycerone 3-phosphate + NADPH + H(+) = a 1-acyl-sn-glycero-3-phosphate + NADP(+). The enzyme catalyses a triacylglycerol + H2O = a diacylglycerol + a fatty acid + H(+). In terms of biological role, can convert acyl and alkyl dihydroxyacetone-phosphate (DHAP) into glycerolipids and ether lipids, respectively. Required for the biosynthesis of phosphatidic acid via the DHAP pathway, where it reduces 1-acyl DHAP to lysophosphatidic acid (LPA). Also has triacylglycerol (TAG) lipase activity. Involved in the mobilization of the non-polar storage lipids triacylglycerols (TAGs) from lipid particles by hydrolysis of TAGs. Lipolysis of TAG by AYR1 is essential for starvation-induced autophagy. Forms an NADPH-regulated cation-selective channel in the mitochondrial outer membrane. This chain is NADPH-dependent 1-acyldihydroxyacetone phosphate reductase (ayr1), found in Schizosaccharomyces pombe (strain 972 / ATCC 24843) (Fission yeast).